The sequence spans 39 residues: U1-ectatotoxin-Et1b subunit A (39 aa).

C14 and C35 form a disulfide bridge.

Belongs to the ectatomin family. Ectatomin-Et subfamily. In terms of assembly, heterodimer of subunits A and B; disulfide-linked. As to expression, expressed by the venom gland.

The protein resides in the secreted. Its subcellular location is the target cell membrane. This Ectatomma tuberculatum (Selva ant) protein is U1-ectatotoxin-Et1b subunit A.